A 406-amino-acid chain; its full sequence is Endoplasmic reticulum resident protein 44 (406 aa).

Positions 1 to 29 (MHPAVFLSLPDLRCSLLLLVTWVFTPVTT) are cleaved as a signal peptide. A Thioredoxin domain is found at 30–138 (EITSLDTENI…VKALADYIRQ (109 aa)). Cystine bridges form between C189–C241 and C301–C318. The tract at residues 236-285 (WIQDKCVPLVREITFENGEELTEEGLPFLILFHMKEDTESLEIFQNEVAR) is interaction with ITPR1. The segment at 360–387 (FHHGPDPTDTAPGEQAQDVASSPPESSF) is disordered. Over residues 377–387 (DVASSPPESSF) the composition is skewed to polar residues. The Prevents secretion from ER motif lies at 403-406 (RDEL).

Forms mixed disulfides with both ERO1A and ERO1B and cargo folding intermediates; the interactions with ERO1A and ERO1B result in their retention in the endoplasmic reticulum. Directly interacts with ITPR1 in a pH-, redox state- and calcium-dependent manner, but not with ITPR2 or ITPR3. The strength of this interaction inversely correlates with calcium concentration.

The protein resides in the endoplasmic reticulum lumen. In terms of biological role, mediates thiol-dependent retention in the early secretory pathway, forming mixed disulfides with substrate proteins through its conserved CRFS motif. Inhibits the calcium channel activity of ITPR1. May have a role in the control of oxidative protein folding in the endoplasmic reticulum. Required to retain ERO1A and ERO1B in the endoplasmic reticulum. This Homo sapiens (Human) protein is Endoplasmic reticulum resident protein 44 (ERP44).